A 556-amino-acid chain; its full sequence is M-phase inducer phosphatase (556 aa).

2 disordered regions span residues 165–186 (STDG…QERR) and 257–297 (TSGL…RPRK). Positions 287 to 297 (KSAHPNMRPRK) are enriched in basic residues. In terms of domain architecture, Rhodanese spans 371-474 (MFDNIMIIDC…FFAEHRSLCY (104 aa)). Residue Cys-421 is part of the active site. Residues 505-516 (RAQTFAFGQQSP) show a composition bias toward polar residues. The interval 505–556 (RAQTFAFGQQSPEMEDSPTGRCRNNPGDRKLLASPFNDSPGSRFPGRRMLSY) is disordered.

This sequence belongs to the MPI phosphatase family.

The enzyme catalyses O-phospho-L-tyrosyl-[protein] + H2O = L-tyrosyl-[protein] + phosphate. In terms of biological role, this protein functions as a dosage-dependent inducer in mitotic control. It is a tyrosine protein phosphatase required for progression of the cell cycle. It may directly dephosphorylate p34(cdc2) and activate the p34(cdc2) kinase activity. The sequence is that of M-phase inducer phosphatase (nimT) from Emericella nidulans (strain FGSC A4 / ATCC 38163 / CBS 112.46 / NRRL 194 / M139) (Aspergillus nidulans).